The following is a 742-amino-acid chain: Phosphatidylinositol 4-phosphate 5-kinase its3 (742 aa).

2 disordered regions span residues 1–21 (MKID…IPSY) and 82–228 (LFKE…PDIG). Low complexity-rich tracts occupy residues 90 to 105 (PSNP…SNDS) and 129 to 142 (PSSN…LQNL). Polar residues-rich tracts occupy residues 158 to 181 (RSSS…SSSQ) and 193 to 218 (EKNS…TSGS). One can recognise a PIPK domain in the interval 264–662 (GHENYVTAYN…RFYKFVESSI (399 aa)). Residues 677-742 (QDGQRVNKQQ…RNVTTNTSSS (66 aa)) are disordered. Residues 680-719 (QRVNKQQSVNAGNVRTNNKHGSLNNNTAPSSRNAKSTSAH) show a composition bias toward polar residues.

Interacts with opy1 (via domain PH 1); the interaction is direct but opy1 does not appear to regulate its3 localization or function. Post-translationally, phosphorylated by casein kinase I. Phosphorylation inactivates the enzyme.

Its subcellular location is the cell membrane. It catalyses the reaction a 1,2-diacyl-sn-glycero-3-phospho-(1D-myo-inositol 4-phosphate) + ATP = a 1,2-diacyl-sn-glycero-3-phospho-(1D-myo-inositol-4,5-bisphosphate) + ADP + H(+). Functionally, catalyzes the phosphorylation of phosphatidylinositol 4-phosphate on the fifth hydroxyl of the myo-inositol ring, to form phosphatidylinositol 4,5-bisphosphate. Involved, together with the calcineurin ppb1, in cytokinesis. In Schizosaccharomyces pombe (strain 972 / ATCC 24843) (Fission yeast), this protein is Phosphatidylinositol 4-phosphate 5-kinase its3 (its3).